Consider the following 96-residue polypeptide: Large ribosomal subunit protein bL25 (96 aa).

Belongs to the bacterial ribosomal protein bL25 family. As to quaternary structure, part of the 50S ribosomal subunit; part of the 5S rRNA/L5/L18/L25 subcomplex. Contacts the 5S rRNA. Binds to the 5S rRNA independently of L5 and L18.

Its function is as follows. This is one of the proteins that binds to the 5S RNA in the ribosome where it forms part of the central protuberance. The chain is Large ribosomal subunit protein bL25 from Francisella tularensis subsp. holarctica (strain FTNF002-00 / FTA).